A 161-amino-acid polypeptide reads, in one-letter code: Regulator of ribonuclease activity A (161 aa).

The protein belongs to the RraA family. Homotrimer. Binds to both RNA-binding sites in the C-terminal region of Rne and to RhlB.

It localises to the cytoplasm. Globally modulates RNA abundance by binding to RNase E (Rne) and regulating its endonucleolytic activity. Can modulate Rne action in a substrate-dependent manner by altering the composition of the degradosome. Modulates RNA-binding and helicase activities of the degradosome. In Pectobacterium atrosepticum (strain SCRI 1043 / ATCC BAA-672) (Erwinia carotovora subsp. atroseptica), this protein is Regulator of ribonuclease activity A.